Here is a 127-residue protein sequence, read N- to C-terminus: Small ribosomal subunit protein uS11 (127 aa).

This sequence belongs to the universal ribosomal protein uS11 family. Part of the 30S ribosomal subunit. Interacts with proteins S7 and S18. Binds to IF-3.

In terms of biological role, located on the platform of the 30S subunit, it bridges several disparate RNA helices of the 16S rRNA. Forms part of the Shine-Dalgarno cleft in the 70S ribosome. The chain is Small ribosomal subunit protein uS11 from Lactococcus lactis subsp. lactis (strain IL1403) (Streptococcus lactis).